A 766-amino-acid chain; its full sequence is MTITTENKTVTHILGYPRVGSQRELKFAQEKYWRGEIEQNELKEVGSLLRHRHWGDQVGAGLDYVSVGDFAWYDHVLNTSMLLGHIPKRHDNGFPDLDTLFRIARGKAPTGCSCAASDMTKWFNTNYHYIVPEFTEDDQFNVSWQQLFGEVAEAKKAGHKVKPVLLGPVSYLWLGKEKEEGFDRLSLLPRLLAAYQKILSKLEALGVEWVQIDEPVLALELPKPWAESFKLAYQVLNGNTKLLLTTYFDNITHHLDKIVELNIDGLHVDLSAAPEQLNAVVDALPENWVLSAGVVNGRNVWRADLSHVLDVLQPVKAKLGQRLWVGSSCSLLHSPIDLDLETDLSPEVRQWLSFAKQKCREFLVAQALDGNAIAIQECAKYSAPIKARATSALVNNPDVRQRTNAITAALAERTAPYAERTRQQRAALNLPLLPTTTIGSFPQTNEIRTQRRDFKAGYLTEADYNTALKGHIADAIQRQEDLDLDVFVHGEAERNDMVEYFAELLEGFAVTRFGWVQSYGSRCVKPAVIVSDIYRAKPMTVEWTTYAQSLTDKLVKGMLTGPVTILGWTFPREDLPRQGIANQIALALRDEVSDLQAAGIKIIQIDEPAIREGLPLKESQWQAYLDWAVNAFKISAASAEPQTQIHTHMCYSEFNHIIKSVAALDADVITIETSRSDMELLKAFEEFDYPNEIGPGVYDIHSPNIPSIEQIVHLVEKAETLIPIERLWINPDCGLKTRNWEETEAALRSMVEATKKLREQWQEKAV.

5-methyltetrahydropteroyltri-L-glutamate-binding positions include R23–K26 and K121. Residues I438–S440 and E491 contribute to the L-homocysteine site. Residues I438–S440 and E491 contribute to the L-methionine site. Residues R522–C523 and W568 each bind 5-methyltetrahydropteroyltri-L-glutamate. D606 lines the L-homocysteine pocket. D606 is an L-methionine binding site. E612 lines the 5-methyltetrahydropteroyltri-L-glutamate pocket. 3 residues coordinate Zn(2+): H648, C650, and E672. Catalysis depends on H701, which acts as the Proton donor. C733 contacts Zn(2+).

This sequence belongs to the vitamin-B12 independent methionine synthase family. Zn(2+) is required as a cofactor.

The catalysed reaction is 5-methyltetrahydropteroyltri-L-glutamate + L-homocysteine = tetrahydropteroyltri-L-glutamate + L-methionine. It functions in the pathway amino-acid biosynthesis; L-methionine biosynthesis via de novo pathway; L-methionine from L-homocysteine (MetE route): step 1/1. Catalyzes the transfer of a methyl group from 5-methyltetrahydrofolate to homocysteine resulting in methionine formation. The chain is 5-methyltetrahydropteroyltriglutamate--homocysteine methyltransferase from Photobacterium profundum (strain SS9).